A 287-amino-acid chain; its full sequence is Lipoyl synthase (287 aa).

Cysteine 34, cysteine 39, cysteine 45, cysteine 60, cysteine 64, cysteine 67, and serine 273 together coordinate [4Fe-4S] cluster. Residues 46–262 (WNKRHATVMI…KYIAYSKGFL (217 aa)) enclose the Radical SAM core domain.

The protein belongs to the radical SAM superfamily. Lipoyl synthase family. [4Fe-4S] cluster is required as a cofactor.

It localises to the cytoplasm. The catalysed reaction is [[Fe-S] cluster scaffold protein carrying a second [4Fe-4S](2+) cluster] + N(6)-octanoyl-L-lysyl-[protein] + 2 oxidized [2Fe-2S]-[ferredoxin] + 2 S-adenosyl-L-methionine + 4 H(+) = [[Fe-S] cluster scaffold protein] + N(6)-[(R)-dihydrolipoyl]-L-lysyl-[protein] + 4 Fe(3+) + 2 hydrogen sulfide + 2 5'-deoxyadenosine + 2 L-methionine + 2 reduced [2Fe-2S]-[ferredoxin]. The protein operates within protein modification; protein lipoylation via endogenous pathway; protein N(6)-(lipoyl)lysine from octanoyl-[acyl-carrier-protein]: step 2/2. In terms of biological role, catalyzes the radical-mediated insertion of two sulfur atoms into the C-6 and C-8 positions of the octanoyl moiety bound to the lipoyl domains of lipoate-dependent enzymes, thereby converting the octanoylated domains into lipoylated derivatives. The chain is Lipoyl synthase from Wolbachia sp. subsp. Drosophila simulans (strain wRi).